The sequence spans 407 residues: Phosphoglycerate kinase (407 aa).

Substrate contacts are provided by residues 24–26 (DIN), Arg39, 60–63 (HQSR), Arg117, and Arg157. ATP contacts are provided by residues Glu330 and 355 to 358 (GGHI).

Belongs to the phosphoglycerate kinase family.

It localises to the cytoplasm. It carries out the reaction (2R)-3-phosphoglycerate + ATP = (2R)-3-phospho-glyceroyl phosphate + ADP. Its pathway is carbohydrate degradation; glycolysis; pyruvate from D-glyceraldehyde 3-phosphate: step 2/5. The polypeptide is Phosphoglycerate kinase (pgk) (Archaeoglobus fulgidus (strain ATCC 49558 / DSM 4304 / JCM 9628 / NBRC 100126 / VC-16)).